We begin with the raw amino-acid sequence, 453 residues long: UDP-glucosyltransferase avaP (453 aa).

It belongs to the UDP-glycosyltransferase family.

It participates in secondary metabolite biosynthesis. Functionally, UDP-glucosyltransferase; part of the cluster that mediates the biosynthesis of a highly modified cyclo-arginine-tryptophan dipeptide (cRW). The first step of the pathway is perfornmed by the arginine-containing cyclodipeptide synthase (RCPDS) avaA that acts as the scaffold-generating enzyme and is responsible for formation of the cyclo-Arg-Trp (cRW) diketopiperazine. AvaB then acts as a multifunctional flavoenzyme that is responsible for generating the cyclo-Arg-formylkynurenine DKP, which can be deformylated by avaC. AvaB then further catalyzes an additional N-oxidation followed by cyclization and dehydration. The next step is an N-acetylation of the guanidine group catalyzed by the arginine N-acetyltransferase avaD. The roles of the additional enzymes identified within the ava cluster still have to be determined. The chain is UDP-glucosyltransferase avaP from Aspergillus versicolor.